A 313-amino-acid chain; its full sequence is MTVSEFPDTQDKQPSIPISLTRVGVTGVKKLIKIKREDKRPIILIPTFDAFVDLPSTQKGVHMSRNPEAISEIVDEAANQSEIHLENICANLVKRLLEKHEYALHAETEARGEYIINKLSPVSKRKTQETTHIIARAIAMKDDEGNISVRKMIGAEVIGMTVCPCAQESVEKDSKDKLLEFLDEETTQKVLDVVTFASHNQRGVGTILLEVPEKQDVNVDDLIKIIQDAMSSPVCEILKRPDENRIVTNAHQNPVFVEDCVRNMVIGLLEKYPNLPDDSVVTIKQVNQESIHQHNAYAEKVASFGKLREENKE.

Belongs to the GTP cyclohydrolase IV family. As to quaternary structure, homodimer. Fe(2+) is required as a cofactor.

It carries out the reaction GTP + H2O = 7,8-dihydroneopterin 2',3'-cyclic phosphate + formate + diphosphate + H(+). It functions in the pathway cofactor biosynthesis; 5,6,7,8-tetrahydromethanopterin biosynthesis. Converts GTP to 7,8-dihydro-D-neopterin 2',3'-cyclic phosphate, the first intermediate in the biosynthesis of coenzyme methanopterin. This Methanosphaera stadtmanae (strain ATCC 43021 / DSM 3091 / JCM 11832 / MCB-3) protein is GTP cyclohydrolase MptA.